Consider the following 405-residue polypeptide: Imidazolonepropionase (405 aa).

His-70 and His-72 together coordinate Fe(3+). Zn(2+) is bound by residues His-70 and His-72. Arg-79, Tyr-142, and His-175 together coordinate 4-imidazolone-5-propanoate. An N-formimidoyl-L-glutamate-binding site is contributed by Tyr-142. His-240 is a Fe(3+) binding site. His-240 is a Zn(2+) binding site. Gln-243 serves as a coordination point for 4-imidazolone-5-propanoate. Asp-315 contacts Fe(3+). Residue Asp-315 coordinates Zn(2+). 2 residues coordinate N-formimidoyl-L-glutamate: Asn-317 and Gly-319. A 4-imidazolone-5-propanoate-binding site is contributed by Thr-320.

It belongs to the metallo-dependent hydrolases superfamily. HutI family. The cofactor is Zn(2+). Fe(3+) is required as a cofactor.

It is found in the cytoplasm. The catalysed reaction is 4-imidazolone-5-propanoate + H2O = N-formimidoyl-L-glutamate. It participates in amino-acid degradation; L-histidine degradation into L-glutamate; N-formimidoyl-L-glutamate from L-histidine: step 3/3. In terms of biological role, catalyzes the hydrolytic cleavage of the carbon-nitrogen bond in imidazolone-5-propanoate to yield N-formimidoyl-L-glutamate. It is the third step in the universal histidine degradation pathway. In Ectopseudomonas mendocina (strain ymp) (Pseudomonas mendocina), this protein is Imidazolonepropionase.